Here is a 1218-residue protein sequence, read N- to C-terminus: NACHT, LRR and PYD domains-containing protein 1 allele 2 (1218 aa).

The interval Met1–Lys61 is disordered. The segment covering Lys7–Thr29 has biased composition (polar residues). One can recognise an NACHT domain in the interval Gln175 to Leu484. Gly181 to Ser188 contributes to the ATP binding site. 3 LRR repeats span residues Lys343 to Cys364, Asn673 to Cys693, and Arg730 to Cys750. Polar residues predominate over residues Thr799–Lys815. The interval Thr799–Val842 is disordered. The segment at Phe835–Phe968 is ZU5. The 284-residue stretch at Phe835 to Ser1118 folds into the FIIND domain. The interval Ser969–Ser1118 is UPA. The CARD domain occupies Asp1122–Ser1211.

This sequence belongs to the NLRP family. As to quaternary structure, interacts (via LRR repeats) with BCL2 and BCL2L1 (via the loop between motifs BH4 and BH3). Interacts with NOD2; this interaction is enhanced in the presence of muramyl dipeptide (MDP) and increases IL1B release. Interacts with EIF2AK2/PKR; this interaction requires EIF2AK2 activity, is accompanied by EIF2AK2 autophosphorylation and promotes inflammasome assembly in response to danger-associated signals. Interacts with MEFV; this interaction targets Nlrp1a to degradation by autophagy, hence preventing excessive IL1B- and IL18-mediated inflammation. Interacts with DPP9; leading to inhibit activation of the inflammasome. DPP9 acts via formation of a ternary complex, composed of a DPP9 homodimer, one full-length NLRP1 protein, and one cleaved C-terminus of Nlrp1a (NACHT, LRR and PYD domains-containing protein 1a, C-terminus). Interacts with DPP8; leading to inhibit activation of the inflammasome, probably via formation of a ternary complex with DPP8. Interacts with the C-terminal part of Nlrp1a (NACHT, LRR and PYD domains-containing protein 1a, C-terminus) in absence of pathogens and other damage-associated signals. In terms of assembly, interacts with the N-terminal part of Nlrp1a (NACHT, LRR and PYD domains-containing protein 1a, N-terminus) in absence of pathogens and other damage-associated signals. Homomultimer; forms the Nlrp1a inflammasome polymeric complex, a filament composed of homopolymers of this form in response to pathogens and other damage-associated signals. The Nlrp1a inflammasome polymeric complex directly recruits pro-caspase-1 (proCASP1) independently of PYCARD/ASC. Interacts (via CARD domain) with CASP1 (via CARD domain); leading to CASP1 activation. Post-translationally, autocatalytically cleaved. Autocatalytic cleavage in FIIND region occurs constitutively, prior to activation signals, and is required for inflammasome activity (IL1B release), possibly by facilitating CASP1 binding. Both N- and C-terminal parts remain associated non-covalently. (Microbial infection) Cleavage by B.anthracis lethal toxin (LT) endopeptidase promotes ubiquitination and degradation of the N-terminal part, releasing the cleaved C-terminal part of the protein (NACHT, LRR and PYD domains-containing protein 1a, C-terminus), which polymerizes and forms the Nlrp1a inflammasome. In terms of processing, ubiquitinated in response to pathogen-associated signals, leading to its degradation by the proteasome and subsequent release of the cleaved C-terminal part of the protein (NACHT, LRR and PYD domains-containing protein 1a, C-terminus), which polymerizes and forms the Nlrp1a inflammasome.

It is found in the cytoplasm. The protein localises to the cytosol. Its subcellular location is the nucleus. It localises to the inflammasome. With respect to regulation, activated by cleavage by B.anthracis lethal toxin (LT) endopeptidase. Cleavage by LT promotes ubiquitination and degradation of the N-terminal part, releasing the cleaved C-terminal part of the protein (NACHT, LRR and PYD domains-containing protein 1a, C-terminus), which polymerizes and forms the Nlrp1a inflammasome. Nlrp1a inflammasome is inhibited by DPP8 and DPP9, which sequester the C-terminal fragment of Nlrp1a (NACHT, LRR and PYD domains-containing protein 1a, C-terminus) in a ternary complex, thereby preventing Nlrp1a oligomerization and activation. Nlrp1a inflammasome is weakly activated by Val-boroPro (Talabostat, PT-100), an inhibitor of dipeptidyl peptidases DPP8 and DPP9. Val-boroPro relieves inhibition of DPP8 and/or DPP9 by promoting disruption of the ternary complex, releasing its C-terminal part from autoinhibition. Weakly activated by Toxoplasma gondii. Acts as the sensor component of the Nlrp1a inflammasome, which mediates inflammasome activation in response to various pathogen-associated signals, leading to subsequent pyroptosis. Inflammasomes are supramolecular complexes that assemble in the cytosol in response to pathogens and other damage-associated signals and play critical roles in innate immunity and inflammation. Acts as a recognition receptor (PRR): recognizes specific pathogens and other damage-associated signals, such as B.anthracis lethal toxin (LT) or Val-boroPro inhibitor, and mediates the formation of the inflammasome polymeric complex. In response to pathogen-associated signals, the N-terminal part of Nlrp1a is degraded by the proteasome, releasing the cleaved C-terminal part of the protein (NACHT, LRR and PYD domains-containing protein 1a, C-terminus), which polymerizes to initiate the formation of the inflammasome complex: the inflammasome directly recruits pro-caspase-1 (proCASP1) independently of PYCARD/ASC and promotes caspase-1 (CASP1) activation, which subsequently cleaves and activates inflammatory cytokines IL1B and IL18 and gasdermin-D (GSDMD), leading to pyroptosis. In the absence of GSDMD expression, the Nlrp1a inflammasome is able to recruit and activate CASP8, leading to activation of gasdermin-E (GSDME). In terms of biological role, constitutes the precursor of the Nlrp1a inflammasome, which mediates autoproteolytic processing within the FIIND domain to generate the N-terminal and C-terminal parts, which are associated non-covalently in absence of pathogens and other damage-associated signals. Its function is as follows. Regulatory part that prevents formation of the Nlrp1a inflammasome: in absence of pathogens and other damage-associated signals, interacts with the C-terminal part of Nlrp1a (NACHT, LRR and PYD domains-containing protein 1a, C-terminus), preventing activation of the Nlrp1a inflammasome. In response to pathogen-associated signals, this part is ubiquitinated by the N-end rule pathway and degraded by the proteasome, releasing the cleaved C-terminal part of the protein, which polymerizes and forms the Nlrp1a inflammasome. Functionally, constitutes the active part of the Nlrp1a inflammasome. In absence of pathogens and other damage-associated signals, interacts with the N-terminal part of Nlrp1a (NACHT, LRR and PYD domains-containing protein 1a, N-terminus), preventing activation of the Nlrp1a inflammasome. In response to pathogen-associated signals, the N-terminal part of Nlrp1a is degraded by the proteasome, releasing this form, which polymerizes to form the Nlrp1a inflammasome complex: the Nlrp1a inflammasome complex then directly recruits pro-caspase-1 (proCASP1) and promotes caspase-1 (CASP1) activation, leading to gasdermin-D (GSDMD) cleavage and subsequent pyroptosis. This Rattus norvegicus (Rat) protein is NACHT, LRR and PYD domains-containing protein 1 allele 2.